A 156-amino-acid polypeptide reads, in one-letter code: Ribonuclease pancreatic (156 aa).

A signal peptide spans 1 to 28; it reads MALEKSLVRLLLLVLILLVLGWVQPSLG. Residues 33 to 43 show a composition bias toward basic and acidic residues; that stretch reads AKKFQRQHMDS. Residues 33 to 53 are disordered; that stretch reads AKKFQRQHMDSDSSPSSSSTY. 2 residues coordinate substrate: lysine 35 and arginine 38. Residue histidine 40 is the Proton acceptor of the active site. 4 disulfide bridges follow: cysteine 54-cysteine 112, cysteine 68-cysteine 123, cysteine 86-cysteine 138, and cysteine 93-cysteine 100. The N-linked (GlcNAc...) asparagine; partial glycan is linked to asparagine 62. Substrate contacts are provided by residues 69 to 73 and lysine 94; that span reads KPVNT. N-linked (GlcNAc...) asparagine glycosylation occurs at asparagine 104. Arginine 113 serves as a coordination point for substrate. Residue asparagine 116 is glycosylated (N-linked (GlcNAc...) asparagine). Histidine 147 (proton donor) is an active-site residue.

Belongs to the pancreatic ribonuclease family. As to quaternary structure, monomer. Interacts with and forms tight 1:1 complexes with RNH1. Dimerization of two such complexes may occur. Interaction with RNH1 inhibits this protein. N-linked glycans are of complex type. As to expression, pancreas and other tissues and body fluids (indicating it may have other physiological functions besides its role in digestion).

It localises to the secreted. The enzyme catalyses an [RNA] containing cytidine + H2O = an [RNA]-3'-cytidine-3'-phosphate + a 5'-hydroxy-ribonucleotide-3'-[RNA].. It carries out the reaction an [RNA] containing uridine + H2O = an [RNA]-3'-uridine-3'-phosphate + a 5'-hydroxy-ribonucleotide-3'-[RNA].. In terms of biological role, endonuclease that catalyzes the cleavage of RNA on the 3' side of pyrimidine nucleotides. Acts on single-stranded and double-stranded RNA. This chain is Ribonuclease pancreatic (RNASE1), found in Homo sapiens (Human).